The following is a 399-amino-acid chain: Zinc finger HIT domain-containing protein 2 (399 aa).

M1 carries the N-acetylmethionine modification. Residues C7, C10, C22, C25, C30, C34, H38, and C41 each coordinate Zn(2+). The segment at 7-41 (CGFCPTGEAQPARYTCPRCNVPYCSLRCYRAHGSC) adopts an HIT-type zinc-finger fold. 2 disordered regions span residues 71–97 (LRQQ…GLSG) and 141–166 (EELG…PEPV).

Interacts (via HIT-type zinc finger) with RUVBL2 in the presence of ATP or ADP; shows a stronger interaction in the presence of ADP.

May act as a bridging factor mediating the interaction between the R2TP/Prefoldin-like (R2TP/PFDL) complex and U5 small nuclear ribonucleoprotein (U5 snRNP). Required for the interaction of R2TP complex subunit RPAP3 and prefoldin-like subunit URI1 with U5 snRNP proteins EFTUD2 and PRPF8. May play a role in regulating the composition of the U5 snRNP complex. The polypeptide is Zinc finger HIT domain-containing protein 2 (ZNHIT2) (Bos taurus (Bovine)).